Consider the following 210-residue polypeptide: MVNCVVKNWQGDEVGQTSLELKVAKEETASHILHRAVVRHLANARQGNASTKTRAEVRGGGRKPWRQKGTGRARAGSNRSPLWRGGGVIFGPKPRDYSQKMNRKERRLALRTALNSKAENLIIVENFAPELPQPKTKELALALTRWGVTEKDKVLLILSEIPENISLSARNICNVKLIRADSINVYDILSASKLVATSDALAKILEVYSD.

Residues 46 to 96 form a disordered region; sequence QGNASTKTRAEVRGGGRKPWRQKGTGRARAGSNRSPLWRGGGVIFGPKPRD. The segment covering 60-71 has biased composition (basic residues); that stretch reads GGRKPWRQKGTG.

It belongs to the universal ribosomal protein uL4 family. As to quaternary structure, part of the 50S ribosomal subunit.

In terms of biological role, one of the primary rRNA binding proteins, this protein initially binds near the 5'-end of the 23S rRNA. It is important during the early stages of 50S assembly. It makes multiple contacts with different domains of the 23S rRNA in the assembled 50S subunit and ribosome. Functionally, forms part of the polypeptide exit tunnel. The chain is Large ribosomal subunit protein uL4 from Gloeothece citriformis (strain PCC 7424) (Cyanothece sp. (strain PCC 7424)).